The primary structure comprises 1092 residues: Probable cellulose synthase A catalytic subunit 5 [UDP-forming] (1092 aa).

Residues Met-1–Met-279 are Cytoplasmic-facing. Zn(2+) contacts are provided by Cys-39, Cys-42, Cys-58, Cys-61, Cys-66, Cys-69, Cys-81, and Cys-84. The RING-type; degenerate zinc-finger motif lies at Cys-39–Lys-85. A helical transmembrane segment spans residues Ile-280–Val-300. Residues Pro-301–Asp-302 are Extracellular-facing. Residues Ala-303–Leu-323 traverse the membrane as a helical segment. Topologically, residues Asp-324–Ser-868 are cytoplasmic. UDP-alpha-D-glucose contacts are provided by Ser-362, Lys-368, Glu-369, and Asp-398. The active site involves Asp-398. Residues Asn-450–Val-479 are a coiled coil. Lys-539 contributes to the UDP-alpha-D-glucose binding site. Residues Lys-540 and Asp-564 each contribute to the Mn(2+) site. Asp-792 is a catalytic residue. Residues Ile-869–Leu-889 form a helical membrane-spanning segment. Residues Leu-890–Asn-901 lie on the Extracellular side of the membrane. Residues Ile-902–Met-922 form a helical membrane-spanning segment. Residues Arg-923–Phe-938 lie on the Cytoplasmic side of the membrane. The helical transmembrane segment at Trp-939–Ile-959 threads the bilayer. Residues Ala-960 to Thr-987 lie on the Extracellular side of the membrane. Residues Thr-988–Val-1008 traverse the membrane as a helical segment. The Cytoplasmic segment spans residues Ser-1009–Trp-1019. A helical transmembrane segment spans residues Gly-1020 to Leu-1040. The Extracellular portion of the chain corresponds to Lys-1041 to Arg-1049. Residues Thr-1050–Val-1070 traverse the membrane as a helical segment. Residues Arg-1071–Asn-1092 lie on the Cytoplasmic side of the membrane.

Belongs to the glycosyltransferase 2 family. Plant cellulose synthase subfamily. Mn(2+) is required as a cofactor. Requires Zn(2+) as cofactor.

Its subcellular location is the cell membrane. The catalysed reaction is [(1-&gt;4)-beta-D-glucosyl](n) + UDP-alpha-D-glucose = [(1-&gt;4)-beta-D-glucosyl](n+1) + UDP + H(+). It participates in glycan metabolism; plant cellulose biosynthesis. In terms of biological role, probable catalytic subunit of cellulose synthase terminal complexes ('rosettes'), required for beta-1,4-glucan microfibril crystallization, a major mechanism of the cell wall formation. The sequence is that of Probable cellulose synthase A catalytic subunit 5 [UDP-forming] (CESA5) from Oryza sativa subsp. indica (Rice).